Here is a 311-residue protein sequence, read N- to C-terminus: Homeobox protein knotted-1-like 10 (311 aa).

Disordered regions lie at residues 1-45 and 153-184; these read MEDL…PATT and LCGGAPPPTDNSDEMVGSSEDEPCSGDADAAD. The span at 12 to 22 shows a compositional bias: gly residues; the sequence is SRGGGGGGGGA. Positions 197–217 constitute an ELK domain; sequence ELKEMLLKKYSGCLSRLRSEF. The segment at residues 218–281 is a DNA-binding region (homeobox; TALE-type); sequence LKKRKKGKLP…NQRKRHWKPS (64 aa).

Belongs to the TALE/KNOX homeobox family.

The protein resides in the nucleus. Functionally, probable transcription factor that may be involved in shoot formation during embryogenesis. The chain is Homeobox protein knotted-1-like 10 (OSH71) from Oryza sativa subsp. indica (Rice).